Reading from the N-terminus, the 153-residue chain is MLYYLIALFIIIADQLTKWLVVSHMELGQSIPVIDQVLYITSHRNTGAAWGILAGQMWFFYVITIAVIIGIVYYIQRYAKGQMLLGISLGLMLGGAAGNFIDRAARQEVVDFIHVIIVDYHYPIFNIADSSLCVGVILLFIHMLFDSGKKKEQ.

Helical transmembrane passes span 52–72 (ILAG…IGIV) and 81–101 (GQML…GNFI). Residues Asp111 and Asp129 contribute to the active site. Residues 124 to 144 (IFNIADSSLCVGVILLFIHML) traverse the membrane as a helical segment.

Belongs to the peptidase A8 family.

The protein resides in the cell membrane. The catalysed reaction is Release of signal peptides from bacterial membrane prolipoproteins. Hydrolyzes -Xaa-Yaa-Zaa-|-(S,diacylglyceryl)Cys-, in which Xaa is hydrophobic (preferably Leu), and Yaa (Ala or Ser) and Zaa (Gly or Ala) have small, neutral side chains.. It functions in the pathway protein modification; lipoprotein biosynthesis (signal peptide cleavage). In terms of biological role, this protein specifically catalyzes the removal of signal peptides from prolipoproteins. The chain is Lipoprotein signal peptidase from Bacillus velezensis (strain DSM 23117 / BGSC 10A6 / LMG 26770 / FZB42) (Bacillus amyloliquefaciens subsp. plantarum).